Here is a 204-residue protein sequence, read N- to C-terminus: SYGHGAATRAKQLLVQAAQPPPAARKHPAAAMIPTGPVTAPKGRHTVEAEAQALPQQAKMQATVAAGPLSTGGVLLRLIKTMIDTKMTKEFNEIIFIISRCQLTRNCRMNSVDAIKLILPSIRGKLFGFLKARIPMXXXHGVMLDDDEYTAMPVGFPKLEIEDETRKFVFRIPKFSKRALVDPSVTPGERTPKLGNKCWNMAAA.

As to expression, component of the acid-soluble organic matrix of the aragonitic skeleton (at protein level).

It is found in the secreted. This is an uncharacterized protein from Acropora millepora (Staghorn coral).